Consider the following 237-residue polypeptide: Corrinoid adenosyltransferase MMAB (237 aa).

Residues 1–26 (MAVWLFGGRLGLRGRLSACRLLCPRF) constitute a mitochondrion transit peptide. Residues 30–49 (GPQGGEDGDRLQPSSTAAKI) are disordered. Residues 54-57 (TKTG), 62-63 (SS), and K72 contribute to the ATP site. S128 is subject to Phosphoserine. Residue 184–188 (RRAER) participates in ATP binding. The residue at position 205 (K205) is an N6-succinyllysine. N208 contacts ATP. N6-acetyllysine; alternate is present on K224. N6-succinyllysine; alternate is present on K224.

It belongs to the Cob(I)alamin adenosyltransferase family. As to quaternary structure, homotrimer.

Its subcellular location is the mitochondrion. It carries out the reaction cob(I)alamin-[corrinoid adenosyltransferase] + ATP = apo-[corrinoid adenosyltransferase] + adenosylcob(III)alamin + triphosphate. Its function is as follows. Converts cob(I)alamin to adenosylcobalamin (adenosylcob(III)alamin), a coenzyme for methylmalonyl-CoA mutase, therefore participates in the final step of the vitamin B12 conversion. Generates adenosylcobalamin (AdoCbl) and directly delivers the cofactor to MUT in a transfer that is stimulated by ATP-binding to MMAB and gated by MMAA. The sequence is that of Corrinoid adenosyltransferase MMAB from Mus musculus (Mouse).